Reading from the N-terminus, the 161-residue chain is PRS fimbrial major pilin protein (161 aa).

Belongs to the fimbrial protein family.

The protein localises to the secreted. It localises to the fimbrium. Its function is as follows. Fimbriae (also called pili), polar filaments radiating from the surface of the bacterium to a length of 0.5-1.5 micrometers and numbering 100-300 per cell, enable bacteria to colonize the epithelium of specific host organs. This is PRS fimbrial major pilin protein (prsA) from Escherichia coli.